The primary structure comprises 896 residues: Alanine--tRNA ligase (896 aa).

His581, His585, Cys684, and His688 together coordinate Zn(2+).

This sequence belongs to the class-II aminoacyl-tRNA synthetase family. Zn(2+) is required as a cofactor.

It is found in the cytoplasm. It catalyses the reaction tRNA(Ala) + L-alanine + ATP = L-alanyl-tRNA(Ala) + AMP + diphosphate. In terms of biological role, catalyzes the attachment of alanine to tRNA(Ala) in a two-step reaction: alanine is first activated by ATP to form Ala-AMP and then transferred to the acceptor end of tRNA(Ala). Also edits incorrectly charged Ser-tRNA(Ala) and Gly-tRNA(Ala) via its editing domain. In Renibacterium salmoninarum (strain ATCC 33209 / DSM 20767 / JCM 11484 / NBRC 15589 / NCIMB 2235), this protein is Alanine--tRNA ligase.